A 69-amino-acid polypeptide reads, in one-letter code: uncharacterized protein (69 aa).

This is an uncharacterized protein from Salmonella paratyphi A (strain ATCC 9150 / SARB42).